The primary structure comprises 161 residues: Cyclic pyranopterin monophosphate synthase (161 aa).

Substrate contacts are provided by residues 73–75 and 110–111; these read LCH and ME. The active site involves Asp-125.

This sequence belongs to the MoaC family. In terms of assembly, homohexamer; trimer of dimers.

The enzyme catalyses (8S)-3',8-cyclo-7,8-dihydroguanosine 5'-triphosphate = cyclic pyranopterin phosphate + diphosphate. It functions in the pathway cofactor biosynthesis; molybdopterin biosynthesis. In terms of biological role, catalyzes the conversion of (8S)-3',8-cyclo-7,8-dihydroguanosine 5'-triphosphate to cyclic pyranopterin monophosphate (cPMP). This is Cyclic pyranopterin monophosphate synthase from Pseudomonas syringae pv. tomato (strain ATCC BAA-871 / DC3000).